We begin with the raw amino-acid sequence, 247 residues long: Pyridoxine 5'-phosphate synthase (247 aa).

Asparagine 12 contacts 3-amino-2-oxopropyl phosphate. 14–15 (DH) is a 1-deoxy-D-xylulose 5-phosphate binding site. Residue arginine 23 participates in 3-amino-2-oxopropyl phosphate binding. The active-site Proton acceptor is histidine 48. Positions 50 and 55 each coordinate 1-deoxy-D-xylulose 5-phosphate. Residue glutamate 75 is the Proton acceptor of the active site. Threonine 105 lines the 1-deoxy-D-xylulose 5-phosphate pocket. The Proton donor role is filled by histidine 196. Residues glycine 197 and 218–219 (GH) contribute to the 3-amino-2-oxopropyl phosphate site.

This sequence belongs to the PNP synthase family. Homooctamer; tetramer of dimers.

The protein localises to the cytoplasm. It carries out the reaction 3-amino-2-oxopropyl phosphate + 1-deoxy-D-xylulose 5-phosphate = pyridoxine 5'-phosphate + phosphate + 2 H2O + H(+). Its pathway is cofactor biosynthesis; pyridoxine 5'-phosphate biosynthesis; pyridoxine 5'-phosphate from D-erythrose 4-phosphate: step 5/5. Its function is as follows. Catalyzes the complicated ring closure reaction between the two acyclic compounds 1-deoxy-D-xylulose-5-phosphate (DXP) and 3-amino-2-oxopropyl phosphate (1-amino-acetone-3-phosphate or AAP) to form pyridoxine 5'-phosphate (PNP) and inorganic phosphate. This is Pyridoxine 5'-phosphate synthase from Pseudomonas fluorescens (strain Pf0-1).